The primary structure comprises 81 residues: MIDVSSQRVNVQRPLDALGNSLNSPVIIKLKGDREFRGVLKSFDLHMNLVLNDAEELEDGEVTRRLGTVLIRGDNIVYISP.

The Sm domain occupies 13-81 (RPLDALGNSL…RGDNIVYISP (69 aa)).

The protein belongs to the snRNP Sm proteins family.

The polypeptide is Putative snRNP Sm-like protein (Methanothermobacter thermautotrophicus (strain ATCC 29096 / DSM 1053 / JCM 10044 / NBRC 100330 / Delta H) (Methanobacterium thermoautotrophicum)).